We begin with the raw amino-acid sequence, 256 residues long: Probable ABC transporter ATP-binding protein SPy_0285/M5005_Spy0242 (256 aa).

The ABC transporter domain occupies 4–246; the sequence is LEINNLHVSI…EKEGYAGIAQ (243 aa). 36–43 is a binding site for ATP; that stretch reads GPNGTGKS.

Belongs to the ABC transporter superfamily. Ycf16 family.

It localises to the cell membrane. This chain is Probable ABC transporter ATP-binding protein SPy_0285/M5005_Spy0242, found in Streptococcus pyogenes serotype M1.